A 65-amino-acid chain; its full sequence is Large ribosomal subunit protein bL35 (65 aa).

The segment at 1-22 (MPKIKTVRGAAKRFKKTGKGGF) is disordered. Residues 10–22 (AAKRFKKTGKGGF) are compositionally biased toward basic residues.

Belongs to the bacterial ribosomal protein bL35 family.

In Escherichia coli O127:H6 (strain E2348/69 / EPEC), this protein is Large ribosomal subunit protein bL35.